A 142-amino-acid polypeptide reads, in one-letter code: Thioredoxin-like protein 4A (142 aa).

An intrachain disulfide couples Cys-38 to Cys-79. Ser-132 is modified (phosphoserine).

This sequence belongs to the DIM1 family. Component of the precatalytic spliceosome (spliceosome B complex). Component of the U5 snRNP complex. Component of the U4/U6-U5 tri-snRNP complex. The U4/U6-U5 tri-snRNP complex is a building block of the precatalytic spliceosome (spliceosome B complex). The U4/U6-U5 tri-snRNP complex is composed of the U4, U6 and U5 snRNAs and at least PRPF3, PRPF4, PRPF6, PRPF8, PRPF31, SNRNP200, TXNL4A, SNRNP40, SNRPB, SNRPD1, SNRPD2, SNRPD3, SNRPE, SNRPF, SNRPG, DDX23, CD2BP2, PPIH, SNU13, EFTUD2, SART1 and USP39, plus LSM2, LSM3, LSM4, LSM5, LSM6, LSM7 and LSM8. Directly interacts with CD2BP2. Interacts with HNRPF, HNRPH2, NEDD9 and PQBP1. Interacts with ERBB4. In terms of processing, the disulfide bond seen in structures determined by X-ray crystallography and NMR is not essential for protein folding and function.

Its subcellular location is the nucleus. Its function is as follows. Plays a role in pre-mRNA splicing as component of the U5 snRNP and U4/U6-U5 tri-snRNP complexes that are involved in spliceosome assembly, and as component of the precatalytic spliceosome (spliceosome B complex). The protein is Thioredoxin-like protein 4A (TXNL4A) of Homo sapiens (Human).